Here is a 207-residue protein sequence, read N- to C-terminus: Thymidylate kinase (207 aa).

7–14 (GPEGAGKS) contacts ATP.

It belongs to the thymidylate kinase family.

The enzyme catalyses dTMP + ATP = dTDP + ADP. Its function is as follows. Phosphorylation of dTMP to form dTDP in both de novo and salvage pathways of dTTP synthesis. The polypeptide is Thymidylate kinase (Pseudomonas putida (strain W619)).